Here is a 115-residue protein sequence, read N- to C-terminus: Non-specific lipid-transfer protein 3 (115 aa).

Residues 1 to 23 (MAFALRFFTCLVLTVCIVASVDA) form the signal peptide. 4 cysteine pairs are disulfide-bonded: Cys-27/Cys-74, Cys-37/Cys-51, Cys-52/Cys-97, and Cys-72/Cys-111.

The protein belongs to the plant LTP family.

Functionally, plant non-specific lipid-transfer proteins transfer phospholipids as well as galactolipids across membranes. May play a role in wax or cutin deposition in the cell walls of expanding epidermal cells and certain secretory tissues. The polypeptide is Non-specific lipid-transfer protein 3 (LTP3) (Arabidopsis thaliana (Mouse-ear cress)).